The primary structure comprises 142 residues: Large ribosomal subunit protein uL13 (142 aa).

Belongs to the universal ribosomal protein uL13 family. Part of the 50S ribosomal subunit.

This protein is one of the early assembly proteins of the 50S ribosomal subunit, although it is not seen to bind rRNA by itself. It is important during the early stages of 50S assembly. This Pseudoalteromonas atlantica (strain T6c / ATCC BAA-1087) protein is Large ribosomal subunit protein uL13.